We begin with the raw amino-acid sequence, 541 residues long: Catalase (541 aa).

The interval Met-1 to Gln-20 is disordered. Catalysis depends on residues His-74 and Asn-147. Position 357 (Tyr-357) interacts with heme.

This sequence belongs to the catalase family. It depends on heme as a cofactor.

The protein localises to the peroxisome matrix. The enzyme catalyses 2 H2O2 = O2 + 2 H2O. Functionally, catalyzes the degradation of hydrogen peroxide (H(2)O(2)) generated by peroxisomal oxidases to water and oxygen, thereby protecting cells from the toxic effects of hydrogen peroxide. This is Catalase (CAT) from Ascaris suum (Pig roundworm).